Here is a 214-residue protein sequence, read N- to C-terminus: Metalloproteinase inhibitor 3 (214 aa).

The signal sequence occupies residues 1-26 (MSVCALTLILGCFLLFLGDISKPAEG). Cys-27 is a binding site for Zn(2+). 2 involved in metalloproteinase-binding regions span residues 27–30 (CTCA) and 91–92 (ES). 6 disulfide bridges follow: Cys-27/Cys-94, Cys-29/Cys-121, Cys-39/Cys-146, Cys-148/Cys-195, Cys-153/Cys-158, and Cys-166/Cys-187. Positions 27-146 (CTCAPSHPQD…GLNHRYPLGC (120 aa)) constitute an NTR domain.

This sequence belongs to the protease inhibitor I35 (TIMP) family.

The protein localises to the secreted. Its subcellular location is the extracellular space. It localises to the extracellular matrix. Complexes with metalloproteinases (such as collagenases) and irreversibly inactivates them by binding to their catalytic zinc cofactor. May form part of a tissue-specific acute response to remodeling stimuli. This is Metalloproteinase inhibitor 3 (timp3) from Xenopus laevis (African clawed frog).